A 421-amino-acid polypeptide reads, in one-letter code: MGKLVVQGGAVLEGEVEISGSKNAALPIMAAAILCDEEVILKNVPRLQDVFVMIDILRSIGFRVEFEENELKIKRENDISQEVPYELVRKMRASFNVLGPIAVRTGRAKVALPGGCSIGVRPVDFHLEGLKKMGFSIKVEHGFVEACFERRIDYVTITLPFPSVGATEHLMTTAALLKGARVVIENAAMEPEIVDLQNFINRMGGHIEGAGTSRIVIEGVEKMQGVEYSIIPDRIEAGTYLVAIAASRGKGLVKNVNPDHLTNFFEKLEETGAKLKVLGNEVEIEMRERPKAVDVTTNPYPGFPTDLQPQMMAYLSTASGVSVITENVFKTRFLHVDELKRMGADIEVSGNVAIVKGVEKLSGAPVEGTDLRATAALLIAGIIADGVTEISNVEHIFRGYEDVIDKFSELGAKIEYVEKEN.

22–23 provides a ligand contact to phosphoenolpyruvate; that stretch reads KN. Arg92 contributes to the UDP-N-acetyl-alpha-D-glucosamine binding site. The active-site Proton donor is Cys116. Cys116 carries the post-translational modification 2-(S-cysteinyl)pyruvic acid O-phosphothioketal. UDP-N-acetyl-alpha-D-glucosamine-binding residues include Asp306 and Val328.

Belongs to the EPSP synthase family. MurA subfamily.

It is found in the cytoplasm. It carries out the reaction phosphoenolpyruvate + UDP-N-acetyl-alpha-D-glucosamine = UDP-N-acetyl-3-O-(1-carboxyvinyl)-alpha-D-glucosamine + phosphate. The protein operates within cell wall biogenesis; peptidoglycan biosynthesis. Its function is as follows. Cell wall formation. Adds enolpyruvyl to UDP-N-acetylglucosamine. In Thermotoga maritima (strain ATCC 43589 / DSM 3109 / JCM 10099 / NBRC 100826 / MSB8), this protein is UDP-N-acetylglucosamine 1-carboxyvinyltransferase.